The sequence spans 251 residues: Aspartate/glutamate leucyltransferase (251 aa).

The protein belongs to the R-transferase family. Bpt subfamily.

It localises to the cytoplasm. The enzyme catalyses N-terminal L-glutamyl-[protein] + L-leucyl-tRNA(Leu) = N-terminal L-leucyl-L-glutamyl-[protein] + tRNA(Leu) + H(+). It catalyses the reaction N-terminal L-aspartyl-[protein] + L-leucyl-tRNA(Leu) = N-terminal L-leucyl-L-aspartyl-[protein] + tRNA(Leu) + H(+). Functions in the N-end rule pathway of protein degradation where it conjugates Leu from its aminoacyl-tRNA to the N-termini of proteins containing an N-terminal aspartate or glutamate. This chain is Aspartate/glutamate leucyltransferase, found in Xanthomonas oryzae pv. oryzae (strain KACC10331 / KXO85).